We begin with the raw amino-acid sequence, 184 residues long: Myosin regulatory light chain 1 (184 aa).

The disordered stretch occupies residues 1–29 (MFSSKENSLGAKRAPFSSNTTSSQRVAAQ). The residue at position 36 (S36) is a Phosphoserine. 2 consecutive EF-hand domains span residues 45-80 (SQIQ…LNQD) and 114-149 (SPRN…MGDR). 5 residues coordinate Ca(2+): D58, D60, D62, N64, and D69.

As to quaternary structure, binds to myosin II chains myo2 and myo3.

The protein localises to the cytoplasm. This Schizosaccharomyces pombe (strain 972 / ATCC 24843) (Fission yeast) protein is Myosin regulatory light chain 1 (rlc1).